Here is a 284-residue protein sequence, read N- to C-terminus: Homeobox protein SIX1 (284 aa).

The segment at residues G124–E183 is a DNA-binding region (homeobox). The disordered stretch occupies residues V168–S284. Basic and acidic residues predominate over residues D179–T190. Over residues D227 to S284 the composition is skewed to polar residues.

This sequence belongs to the SIX/Sine oculis homeobox family. As to quaternary structure, interacts with DACH1. Interacts with EYA1. Interacts with EYA2. Interacts with CDH1. Interacts with TBX18. Interacts with CEBPA. Interacts with CEBPB. Interacts with EBF2. Post-translationally, phosphorylated during interphase; becomes hyperphosphorylated during mitosis. Hyperphosphorylation impairs binding to promoter elements. In terms of processing, ubiquitinated by the anaphase promoting complex (APC), leading to its proteasomal degradation. As to expression, expressed in phalangeal tendons and in skeletal muscle and in head and body mesenchyme.

The protein resides in the nucleus. It is found in the cytoplasm. Its function is as follows. Transcription factor that is involved in the regulation of cell proliferation, apoptosis and embryonic development. Plays an important role in the development of several organs, including kidney, muscle and inner ear. Depending on context, functions as a transcriptional repressor or activator. Lacks an activation domain, and requires interaction with EYA family members for transcription activation. Mediates nuclear translocation of EYA1 and EYA2. Binds the 5'-TCA[AG][AG]TTNC-3' motif present in the MEF3 element in the MYOG promoter and CIDEA enhancer. Regulates the expression of numerous genes, including MYC, CCNA1, CCND1 and EZR. Acts as an activator of the IGFBP5 promoter, probably coactivated by EYA2. Repression of precursor cell proliferation in myoblasts is switched to activation through recruitment of EYA3 to the SIX1-DACH1 complex. During myogenesis, seems to act together with EYA2 and DACH2. Regulates the expression of CCNA1. Promotes brown adipocyte differentiation. The chain is Homeobox protein SIX1 (Six1) from Mus musculus (Mouse).